We begin with the raw amino-acid sequence, 1059 residues long: Microtubule-associated protein 1S (1059 aa).

The tract at residues 1–797 (MAAVAGSGAA…SESLPTLSDS (797 aa)) is necessary for the microtubule-organizing center localization. 2 positions are modified to phosphoserine: S321 and S472. 2 disordered regions span residues 461–733 (PQDL…ASPH) and 751–942 (VPMA…SATP). 2 stretches are compositionally biased toward basic and acidic residues: residues 466–486 (GPGRAESKESVGSRDSSKREG) and 494–530 (PGQERPGVARKEPARAEAPRKTEKEAKTPRELKKDPK). The span at 547–557 (SVPNLKKTNAQ) shows a compositional bias: polar residues. The residue at position 582 (S582) is a Phosphoserine. Residues 591-603 (ASPPSAACGSPAS) are compositionally biased toward low complexity. At T638 the chain carries Phosphothreonine. Residue S640 is modified to Phosphoserine. The segment covering 642–652 (ESHRSPAEGSE) has biased composition (basic and acidic residues). Phosphoserine is present on residues S655 and S657. The necessary for interaction with RASSF1 isoform A and isoform C stretch occupies residues 666 to 1059 (PDASPTVTTP…DAFPACKVEF (394 aa)). The span at 670-680 (PTVTTPTVTTP) shows a compositional bias: low complexity. A necessary for association with microtubules region spans residues 714–966 (EAGLSLPLRG…GSSAHLVDEE (253 aa)). Phosphoserine is present on residues S731 and S759. Low complexity predominate over residues 759 to 769 (SPGSSNDSSAR). Over residues 783 to 796 (PPTSVSESLPTLSD) the composition is skewed to polar residues. The residue at position 809 (S809) is a Phosphoserine. The segment covering 825-836 (PDPLKVPPPLPD) has biased composition (pro residues). Composition is skewed to low complexity over residues 873–887 (AAAPKATPVAAAKTK) and 923–936 (TATRGPSGSASSRP). The interval 960-1059 (AHLVDEEFFQ…DAFPACKVEF (100 aa)) is necessary for association with actin. The interval 967-991 (FFQRVRALCYVISGQDQRKEEGMRA) is necessary for the mitochondrial aggregation and genome destruction.

The protein belongs to the MAP1 family. In terms of assembly, heterodimer of a heavy and a light chain. Interacts with microtubules and actin. Both MAP1S heavy and light chains interact with microtubules. MAP1S light chain interacts with actin. Interacts (via C-terminus) with GAN (via Kelch domains). Interacts with ESR1, LRPPRC, RASSF1 isoform A and isoform C, microtubules and VCY2. Interacts with WDR47 (via N-terminus of light chain). Expressed in neurons (at protein level). Expressed in spermatocytes, spermatids and spermatozoa. Expressed in the cerebral cortex. Highly expressed in testis. Moderately expressed in the brain, colon, heart, kidney, liver, lung, placenta, small intestine, spleen and stomach. Weakly expressed in muscle.

The protein localises to the nucleus. It is found in the cytoplasm. Its subcellular location is the cytosol. The protein resides in the cytoskeleton. It localises to the spindle. Microtubule-associated protein that mediates aggregation of mitochondria resulting in cell death and genomic destruction (MAGD). Plays a role in anchoring the microtubule organizing center to the centrosomes. Binds to DNA. Plays a role in apoptosis. Involved in the formation of microtubule bundles. The protein is Microtubule-associated protein 1S (MAP1S) of Homo sapiens (Human).